The following is a 473-amino-acid chain: Glutathione reductase, mitochondrial (473 aa).

2 residues coordinate FAD: Ser30 and Gly31. Ser30 serves as a coordination point for glutathione. Arg37 provides a ligand contact to glutathione. Residues Glu50, Thr57, Cys58, and Lys66 each coordinate FAD. A disulfide bridge connects residues Cys58 and Cys63. Tyr114 contacts glutathione. An FAD-binding site is contributed by Ala130. The NADP(+) site is built by Ala190, Ile193, Glu196, Arg213, Arg219, and Gly279. Asp320 serves as a coordination point for FAD. Leu326 contributes to the NADP(+) binding site. Thr328 contributes to the FAD binding site. Arg336 is a binding site for glutathione. Val359 is an NADP(+) binding site. Position 456 (His456) interacts with FAD. His456 (proton acceptor) is an active-site residue.

This sequence belongs to the class-I pyridine nucleotide-disulfide oxidoreductase family. Requires FAD as cofactor. Expressed at all larval stages and in adults in intestine, vulva muscle, pharynx and some cells in the tail.

Its subcellular location is the cytoplasm. It localises to the mitochondrion. The catalysed reaction is 2 glutathione + NADP(+) = glutathione disulfide + NADPH + H(+). Functionally, catalyzes the reduction of glutathione disulfide (GSSG) to reduced glutathione (GSH). Constitutes the major mechanism to maintain a high GSH:GSSG ratio in the cytosol. Involved in resistance to oxidative stress and starvation. Together with thioredoxin reductase txtr-1, required for the reduction of disulfide groups in the cuticle during molting. In Caenorhabditis elegans, this protein is Glutathione reductase, mitochondrial.